Reading from the N-terminus, the 22-residue chain is Cysteine-rich venom protein notescatin (22 aa).

Residues 1–15 (SNKKDYQKEIVDKHN) show a composition bias toward basic and acidic residues. A disordered region spans residues 1–22 (SNKKDYQKEIVDKHNALRRSVK).

The protein belongs to the CRISP family. Post-translationally, contains 8 disulfide bonds. In terms of tissue distribution, expressed by the venom gland.

Its subcellular location is the secreted. This is Cysteine-rich venom protein notescatin from Notechis scutatus scutatus (Mainland tiger snake).